The primary structure comprises 82 residues: Small ribosomal subunit protein bS18 (82 aa).

The disordered stretch occupies residues 1 to 25 (MTEMNQTAIRRPFHRRRKTCPFSGT).

The protein belongs to the bacterial ribosomal protein bS18 family. In terms of assembly, part of the 30S ribosomal subunit. Forms a tight heterodimer with protein bS6.

In terms of biological role, binds as a heterodimer with protein bS6 to the central domain of the 16S rRNA, where it helps stabilize the platform of the 30S subunit. In Bartonella henselae (strain ATCC 49882 / DSM 28221 / CCUG 30454 / Houston 1) (Rochalimaea henselae), this protein is Small ribosomal subunit protein bS18.